We begin with the raw amino-acid sequence, 154 residues long: Protein FasC (154 aa).

Belongs to the periplasmic pilus chaperone family.

Its function is as follows. Could be required for the biogenesis of a putative fimbria. The sequence is that of Protein FasC (fasC) from Escherichia coli.